The chain runs to 465 residues: MATTFRSQTLSKDDVNYRMHFRMINEQQVEDITIQFFYKPHTISLLTVTVLSLMYFAFTRDDGDPDSNLRVGLILLVSFFLVISVLAFPNGPFTRPHPAIWRIVFGLSVLYFLFLVFIIFLNWDQVKALMFWLDPNLRYAKREADVMEYAVNCHVITWERILSHFDIFAFSHFWGWGMKALLIRSYGLCWTISITWELTELFFMHLLPNFAECWWDQVILDILLCNGGGIWLGMTVCRFLEMRTYHWASIKDIHSTTGKIKRAVLQFTPASWTYVRWLDPKSSLQRVMGVYLFMIIWQLTELNTFFLKHIFVFPACHALSWCRILFIGIITAPTVRQYYAYLTDTQCKRVGTQCWVFGAIAFLEALACIKFGQDLFSKTQILYVILWLVCLAFITFLCLYVMVWYAENYGPRQKSFSECEDSIYSEAGDSVTECKGEFEIDSTTSCSTRKRRDSGDSRTINGMEK.

The Cytoplasmic portion of the chain corresponds to 1 to 35 (MATTFRSQTLSKDDVNYRMHFRMINEQQVEDITIQ). The helical transmembrane segment at 36 to 56 (FFYKPHTISLLTVTVLSLMYF) threads the bilayer. The Lumenal segment spans residues 57-70 (AFTRDDGDPDSNLR). The chain crosses the membrane as a helical span at residues 71 to 91 (VGLILLVSFFLVISVLAFPNG). At 92–102 (PFTRPHPAIWR) the chain is on the cytoplasmic side. A helical transmembrane segment spans residues 103 to 123 (IVFGLSVLYFLFLVFIIFLNW). At 124 to 286 (DQVKALMFWL…WLDPKSSLQR (163 aa)) the chain is on the lumenal side. The helical transmembrane segment at 287-307 (VMGVYLFMIIWQLTELNTFFL) threads the bilayer. Over 308 to 309 (KH) the chain is Cytoplasmic. Residues 310 to 330 (IFVFPACHALSWCRILFIGII) form a helical membrane-spanning segment. Over 331 to 355 (TAPTVRQYYAYLTDTQCKRVGTQCW) the chain is Lumenal. Residues 356-376 (VFGAIAFLEALACIKFGQDLF) traverse the membrane as a helical segment. At 377-380 (SKTQ) the chain is on the cytoplasmic side. Residues 381–401 (ILYVILWLVCLAFITFLCLYV) form a helical membrane-spanning segment. At 402–465 (MVWYAENYGP…DSRTINGMEK (64 aa)) the chain is on the lumenal side. Residues 446-465 (CSTRKRRDSGDSRTINGMEK) form a disordered region.

Belongs to the phosphatidyl serine synthase family.

It is found in the endoplasmic reticulum membrane. It carries out the reaction a 1,2-diacyl-sn-glycero-3-phosphoethanolamine + L-serine = a 1,2-diacyl-sn-glycero-3-phospho-L-serine + ethanolamine. The catalysed reaction is a 1,2-diacyl-sn-glycero-3-phosphocholine + L-serine = a 1,2-diacyl-sn-glycero-3-phospho-L-serine + choline. It participates in phospholipid metabolism; phosphatidylserine biosynthesis. Functionally, catalyzes a base-exchange reaction in which the polar head group of phosphatidylethanolamine (PE) or phosphatidylcholine (PC) is replaced by L-serine. Catalyzes mainly the conversion of phosphatidylcholine but also converts, in vitro and to a lesser extent, phosphatidylethanolamine. The chain is Phosphatidylserine synthase 1 (ptdss1) from Danio rerio (Zebrafish).